A 361-amino-acid polypeptide reads, in one-letter code: DNA replication and repair protein RecF (361 aa).

30–37 (GDNAQGKT) contributes to the ATP binding site.

Belongs to the RecF family.

The protein resides in the cytoplasm. Functionally, the RecF protein is involved in DNA metabolism; it is required for DNA replication and normal SOS inducibility. RecF binds preferentially to single-stranded, linear DNA. It also seems to bind ATP. The polypeptide is DNA replication and repair protein RecF (Clostridium botulinum (strain Alaska E43 / Type E3)).